The chain runs to 271 residues: 3-methyl-2-oxobutanoate hydroxymethyltransferase (271 aa).

Residues aspartate 51 and aspartate 90 each coordinate Mg(2+). 3-methyl-2-oxobutanoate-binding positions include 51-52 (DS), aspartate 90, and lysine 118. Mg(2+) is bound at residue glutamate 120. Catalysis depends on glutamate 186, which acts as the Proton acceptor.

Belongs to the PanB family. Homodecamer; pentamer of dimers. Mg(2+) serves as cofactor.

It is found in the cytoplasm. It catalyses the reaction 3-methyl-2-oxobutanoate + (6R)-5,10-methylene-5,6,7,8-tetrahydrofolate + H2O = 2-dehydropantoate + (6S)-5,6,7,8-tetrahydrofolate. It functions in the pathway cofactor biosynthesis; (R)-pantothenate biosynthesis; (R)-pantoate from 3-methyl-2-oxobutanoate: step 1/2. Functionally, catalyzes the reversible reaction in which hydroxymethyl group from 5,10-methylenetetrahydrofolate is transferred onto alpha-ketoisovalerate to form ketopantoate. The polypeptide is 3-methyl-2-oxobutanoate hydroxymethyltransferase (Xanthomonas axonopodis pv. citri (strain 306)).